A 401-amino-acid polypeptide reads, in one-letter code: Exodeoxyribonuclease 7 large subunit (401 aa).

Belongs to the XseA family. In terms of assembly, heterooligomer composed of large and small subunits.

It is found in the cytoplasm. The enzyme catalyses Exonucleolytic cleavage in either 5'- to 3'- or 3'- to 5'-direction to yield nucleoside 5'-phosphates.. In terms of biological role, bidirectionally degrades single-stranded DNA into large acid-insoluble oligonucleotides, which are then degraded further into small acid-soluble oligonucleotides. The sequence is that of Exodeoxyribonuclease 7 large subunit from Thermoanaerobacter pseudethanolicus (strain ATCC 33223 / 39E) (Clostridium thermohydrosulfuricum).